The primary structure comprises 397 residues: Riboflavin biosynthesis protein RibBA (397 aa).

The interval 1–199 (MFHRIEEALE…IEDLIAYRRH (199 aa)) is DHBP synthase. D-ribulose 5-phosphate is bound by residues 26 to 27 (RE), Asp-31, 138 to 142 (RAGHT), and Glu-162. Glu-27 is a Mg(2+) binding site. Residue His-141 coordinates Mg(2+). The GTP cyclohydrolase II stretch occupies residues 200–397 (HETLVTREVE…ASKLGHLLNL (198 aa)). 250–254 (RVHSE) contacts GTP. The Zn(2+) site is built by Cys-255, Cys-266, and Cys-268. GTP contacts are provided by residues Gln-271, 293 to 295 (EGR), and Thr-315. The active-site Proton acceptor; for GTP cyclohydrolase activity is the Asp-327. Arg-329 serves as the catalytic Nucleophile; for GTP cyclohydrolase activity. The GTP site is built by Thr-350 and Lys-355.

This sequence in the N-terminal section; belongs to the DHBP synthase family. It in the C-terminal section; belongs to the GTP cyclohydrolase II family. Requires Mg(2+) as cofactor. The cofactor is Mn(2+). Zn(2+) is required as a cofactor.

The catalysed reaction is D-ribulose 5-phosphate = (2S)-2-hydroxy-3-oxobutyl phosphate + formate + H(+). The enzyme catalyses GTP + 4 H2O = 2,5-diamino-6-hydroxy-4-(5-phosphoribosylamino)-pyrimidine + formate + 2 phosphate + 3 H(+). It participates in cofactor biosynthesis; riboflavin biosynthesis; 2-hydroxy-3-oxobutyl phosphate from D-ribulose 5-phosphate: step 1/1. The protein operates within cofactor biosynthesis; riboflavin biosynthesis; 5-amino-6-(D-ribitylamino)uracil from GTP: step 1/4. In terms of biological role, catalyzes the conversion of D-ribulose 5-phosphate to formate and 3,4-dihydroxy-2-butanone 4-phosphate. Catalyzes the conversion of GTP to 2,5-diamino-6-ribosylamino-4(3H)-pyrimidinone 5'-phosphate (DARP), formate and pyrophosphate. This is Riboflavin biosynthesis protein RibBA from Bacillus mycoides (strain KBAB4) (Bacillus weihenstephanensis).